The following is a 598-amino-acid chain: Elongation factor 4 (598 aa).

Positions 2-184 (KQIRNFSIIA…RLVKEIPAPE (183 aa)) constitute a tr-type G domain. Residues 14–19 (DHGKST) and 131–134 (NKID) each bind GTP.

Belongs to the TRAFAC class translation factor GTPase superfamily. Classic translation factor GTPase family. LepA subfamily.

Its subcellular location is the cell inner membrane. It carries out the reaction GTP + H2O = GDP + phosphate + H(+). Required for accurate and efficient protein synthesis under certain stress conditions. May act as a fidelity factor of the translation reaction, by catalyzing a one-codon backward translocation of tRNAs on improperly translocated ribosomes. Back-translocation proceeds from a post-translocation (POST) complex to a pre-translocation (PRE) complex, thus giving elongation factor G a second chance to translocate the tRNAs correctly. Binds to ribosomes in a GTP-dependent manner. The sequence is that of Elongation factor 4 from Photorhabdus laumondii subsp. laumondii (strain DSM 15139 / CIP 105565 / TT01) (Photorhabdus luminescens subsp. laumondii).